Consider the following 313-residue polypeptide: MNQLSFLLFLIATTRGWSTDEANTYFKEWTCSSSPSLPRSCKEIKDECPSAFDGLYFLRTENGVIYQTFCDMTSGGGGWTLVASVHENDMRGKCTVGDRWSSQQGSKAVYPEGDGNWANYNTFGSAEAATSDDYKNPGYYDIQAKDLGIWHVPNKSPMQHWRNSSLLRYRTDTGFLQTLGHNLFGIYQKYPVKYGEGKCWTDNGPVIPVVYDFGDAQKTASYYSPYGQREFTAGFVQFRVFNNERAANALCAGMRVTGCNTEHHCIGGGGYFPEASPQQCGDFSGFDWSGYGTHVGYSSSREITEAAVLLFYR.

The first 18 residues, 1 to 18 (MNQLSFLLFLIATTRGWS), serve as a signal peptide directing secretion. The 224-residue stretch at 32-255 (SSSPSLPRSC…AANALCAGMR (224 aa)) folds into the Fibrinogen C-terminal domain. Cysteine 41 and cysteine 70 are oxidised to a cystine. Residues histidine 86, glutamate 87, aspartate 89, glycine 92, glycine 97, aspartate 98, and aspartate 133 each contribute to the Ca(2+) site. Intrachain disulfides connect cysteine 94-cysteine 280, cysteine 199-cysteine 259, and cysteine 251-cysteine 265. Asparagine 163 is a glycosylation site (N-linked (GlcNAc...) asparagine). Asparagine 260, glutamate 262, glutamate 274, and aspartate 282 together coordinate Ca(2+). A carbohydrate-binding positions include 262–263 (EH) and glutamate 274. Residue serine 298 is the site of GPI-anchor amidated serine attachment. Residues 299–313 (SSREITEAAVLLFYR) constitute a propeptide that is removed on maturation.

Homotrimer; disulfide-linked. May interact with LTF. In terms of processing, N-glycosylated. In terms of tissue distribution, highly expressed in omental adipose tissue where it is found in stromal vascular cells but not in fat cells but is barely detectable in subcutaneous adipose tissue (at protein level). Highly expressed in the small intestine. Also found in the heart, testis, colon, salivary gland, skeletal muscle, pancreas and thyroid and, to a lesser degree, in the uterus, spleen, prostate, lymph node and thymus.

It is found in the cell membrane. The protein resides in the secreted. Functionally, lectin that specifically recognizes microbial carbohydrate chains in a calcium-dependent manner. Binds to microbial glycans that contain a terminal acyclic 1,2-diol moiety, including beta-linked D-galactofuranose (beta-Galf), D-phosphoglycerol-modified glycans, D-glycero-D-talo-oct-2-ulosonic acid (KO) and 3-deoxy-D-manno-oct-2-ulosonic acid (KDO). Binds to glycans from Gram-positive and Gram-negative bacteria, including K.pneumoniae, S.pneumoniae, Y.pestis, P.mirabilis and P.vulgaris. Does not bind human glycans. Probably plays a role in the defense system against microorganisms. May function as adipokine that has no effect on basal glucose uptake but enhances insulin-stimulated glucose uptake in adipocytes. Increases AKT phosphorylation in the absence and presence of insulin. May interact with lactoferrin/LTF and increase its uptake, and may thereby play a role in iron absorption. The sequence is that of Intelectin-1 (ITLN1) from Homo sapiens (Human).